The primary structure comprises 142 residues: SLSDKDKAAVKAIWNKISKSADVIGADAMGRMLVVYPQTKTYFSHWSDLSPNSAPVKNHGKTVMTGVALAVSNIDDMTTGLKALSEKHAFQLRVDPSNFKILSHCILVVIAMMYPKDFTPEAHVSMDKFFCGLSLALAEKYR.

Ser-1 carries the N-acetylserine modification. The Globin domain occupies 1–142 (SLSDKDKAAV…LSLALAEKYR (142 aa)). Positions 59 and 88 each coordinate heme b.

It belongs to the globin family. Heterotetramer of two alpha chains and two beta chains. In terms of tissue distribution, red blood cells.

Involved in oxygen transport from gills to the various peripheral tissues. The chain is Hemoglobin subunit alpha from Lycodes reticulatus (Arctic eelpout).